A 289-amino-acid polypeptide reads, in one-letter code: T-cell ecto-ADP-ribosyltransferase 2 (289 aa).

The N-terminal stretch at 1–20 (MTSKIFKFFLTWWLTQQVTG) is a signal peptide. 2 disulfide bridges follow: Cys-41–Cys-246 and Cys-141–Cys-193. In terms of domain architecture, TR mART core spans 61 to 241 (EELKLEWEKA…IFLDSPERKK (181 aa)). Asn-79 is a glycosylation site (N-linked (GlcNAc...) asparagine). Tyr-98, Arg-146, and Gln-164 together coordinate NAD(+). Residue Arg-146 is part of the active site. Residue Ser-167 is part of the active site. Ser-202 is an NAD(+) binding site. Glu-209 is an active-site residue. Asn-249 carries an N-linked (GlcNAc...) asparagine glycan. Ser-260 carries the GPI-anchor amidated serine lipid modification. Residues 261–289 (ISGSRESCVSLFLVVLLGLLVQQLTLAEL) constitute a propeptide, removed in mature form.

Belongs to the Arg-specific ADP-ribosyltransferase family. Expressed in spleen, intestine and thymus.

The protein localises to the cell membrane. The catalysed reaction is L-arginyl-[protein] + NAD(+) = N(omega)-(ADP-D-ribosyl)-L-arginyl-[protein] + nicotinamide + H(+). It carries out the reaction NAD(+) + H2O = ADP-D-ribose + nicotinamide + H(+). Functionally, has both NAD(+) glycohydrolase and ADP-ribosyltransferase activity. This Mus musculus (Mouse) protein is T-cell ecto-ADP-ribosyltransferase 2 (Art2b).